Reading from the N-terminus, the 120-residue chain is NADH-quinone oxidoreductase subunit A (120 aa).

The next 3 helical transmembrane spans lie at 6 to 26, 63 to 83, and 89 to 109; these read YGII…ALAT, FLYA…YPWA, and LGLF…LGLW.

The protein belongs to the complex I subunit 3 family. NDH-1 is composed of 14 different subunits. Subunits NuoA, H, J, K, L, M, N constitute the membrane sector of the complex.

It localises to the cell membrane. It catalyses the reaction a quinone + NADH + 5 H(+)(in) = a quinol + NAD(+) + 4 H(+)(out). Its function is as follows. NDH-1 shuttles electrons from NADH, via FMN and iron-sulfur (Fe-S) centers, to quinones in the respiratory chain. The immediate electron acceptor for the enzyme in this species is believed to be a menaquinone. Couples the redox reaction to proton translocation (for every two electrons transferred, four hydrogen ions are translocated across the cytoplasmic membrane), and thus conserves the redox energy in a proton gradient. This chain is NADH-quinone oxidoreductase subunit A, found in Moorella thermoacetica (strain ATCC 39073 / JCM 9320).